The following is a 92-amino-acid chain: Probable Fe(2+)-trafficking protein (92 aa).

Belongs to the Fe(2+)-trafficking protein family.

Functionally, could be a mediator in iron transactions between iron acquisition and iron-requiring processes, such as synthesis and/or repair of Fe-S clusters in biosynthetic enzymes. The polypeptide is Probable Fe(2+)-trafficking protein (Shewanella sp. (strain ANA-3)).